Reading from the N-terminus, the 294-residue chain is ATP synthase gamma chain (294 aa).

The protein belongs to the ATPase gamma chain family. F-type ATPases have 2 components, CF(1) - the catalytic core - and CF(0) - the membrane proton channel. CF(1) has five subunits: alpha(3), beta(3), gamma(1), delta(1), epsilon(1). CF(0) has three main subunits: a, b and c.

The protein resides in the cell inner membrane. Functionally, produces ATP from ADP in the presence of a proton gradient across the membrane. The gamma chain is believed to be important in regulating ATPase activity and the flow of protons through the CF(0) complex. The protein is ATP synthase gamma chain of Paraburkholderia phytofirmans (strain DSM 17436 / LMG 22146 / PsJN) (Burkholderia phytofirmans).